Consider the following 392-residue polypeptide: MKFVDEAEIRVEAGDGGNGVIGFRREKYVPKGGPDGGDGGDGGSVFLQADENLNTLIDYRFERFHRAERGQNGQGSNCIGKKGQDLTVMVPVGTRATDSDTGEVLGDLTRHGQKLKVAQGGFHGLGNTRFKSSTNRAPRQKTNGTPGEIRNLKLELMLLADVGLLGMPNAGKSTFIRSVSAAKPKVADYPFTTLVPNLGVVRQDAQRSFVVADIPGLIEGAADGAGLGIRFLKHLERCRILLHVVDIFPVDETDPADNAKAIIEELEKYSPKLAQKPRWLVFNKVDLLLEEEVEERCQHVIDALGWEGPVYQISAFQKMNLDPLCNDVMDFIETLPAETEQEEEKKEVEFKWDTYHKNTLEAHDEFEDDLGDDLDDDDWDEDDYDVEVEYRR.

The Obg domain occupies 1-159 (MKFVDEAEIR…RNLKLELMLL (159 aa)). Residues 121–146 (GFHGLGNTRFKSSTNRAPRQKTNGTP) form a disordered region. Residues 129 to 145 (RFKSSTNRAPRQKTNGT) show a composition bias toward polar residues. In terms of domain architecture, OBG-type G spans 160-333 (ADVGLLGMPN…LCNDVMDFIE (174 aa)). GTP is bound by residues 166–173 (GMPNAGKS), 191–195 (FTTLV), 213–216 (DIPG), 283–286 (NKVD), and 314–316 (SAF). The Mg(2+) site is built by Ser-173 and Thr-193.

Belongs to the TRAFAC class OBG-HflX-like GTPase superfamily. OBG GTPase family. Monomer. Mg(2+) is required as a cofactor.

The protein localises to the cytoplasm. Functionally, an essential GTPase which binds GTP, GDP and possibly (p)ppGpp with moderate affinity, with high nucleotide exchange rates and a fairly low GTP hydrolysis rate. Plays a role in control of the cell cycle, stress response, ribosome biogenesis and in those bacteria that undergo differentiation, in morphogenesis control. The protein is GTPase Obg of Alteromonas mediterranea (strain DSM 17117 / CIP 110805 / LMG 28347 / Deep ecotype).